A 113-amino-acid chain; its full sequence is MSTEFPMRIGAEVALPALQGWNAAAGRDAIEKRYRFDNFNAAFGFMARVAMFAEKMDHHPEWRNVYNRVDVTLTTHDAGGVTELDVRMAQFMDEAAGRLGATGLPARADQPRT.

Belongs to the pterin-4-alpha-carbinolamine dehydratase family.

The catalysed reaction is (4aS,6R)-4a-hydroxy-L-erythro-5,6,7,8-tetrahydrobiopterin = (6R)-L-erythro-6,7-dihydrobiopterin + H2O. This Bordetella bronchiseptica (strain ATCC BAA-588 / NCTC 13252 / RB50) (Alcaligenes bronchisepticus) protein is Putative pterin-4-alpha-carbinolamine dehydratase.